We begin with the raw amino-acid sequence, 392 residues long: S-adenosylmethionine synthase (392 aa).

Histidine 22 is a binding site for ATP. Position 24 (aspartate 24) interacts with Mg(2+). Glutamate 50 is a binding site for K(+). Positions 63 and 106 each coordinate L-methionine. Residues 106–116 (QSPDITQGVTL) form a flexible loop region. Residues 170–172 (DGK), 236–237 (KF), aspartate 245, 251–252 (RK), alanine 268, and lysine 272 each bind ATP. An L-methionine-binding site is contributed by aspartate 245. Lysine 276 provides a ligand contact to L-methionine.

It belongs to the AdoMet synthase family. As to quaternary structure, homotetramer; dimer of dimers. It depends on Mg(2+) as a cofactor. Requires K(+) as cofactor.

It localises to the cytoplasm. It catalyses the reaction L-methionine + ATP + H2O = S-adenosyl-L-methionine + phosphate + diphosphate. Its pathway is amino-acid biosynthesis; S-adenosyl-L-methionine biosynthesis; S-adenosyl-L-methionine from L-methionine: step 1/1. Its function is as follows. Catalyzes the formation of S-adenosylmethionine (AdoMet) from methionine and ATP. The overall synthetic reaction is composed of two sequential steps, AdoMet formation and the subsequent tripolyphosphate hydrolysis which occurs prior to release of AdoMet from the enzyme. The protein is S-adenosylmethionine synthase of Sulfurimonas denitrificans (strain ATCC 33889 / DSM 1251) (Thiomicrospira denitrificans (strain ATCC 33889 / DSM 1251)).